The chain runs to 570 residues: Transmembrane 7 superfamily member 3 (570 aa).

A signal peptide spans 1 to 21 (MGFLQLLVVAVLASEHRVAGA). Residues Asn-27, Asn-61, Asn-75, Asn-87, and Asn-264 are each glycosylated (N-linked (GlcNAc...) asparagine). Helical transmembrane passes span 296–313 (VFFT…FFGH), 320–342 (LFFI…LTPI), 347–369 (NLIL…WWRF), 371–393 (ILSI…VTFF), 408–430 (FWVT…LRIL), 437–459 (VIGS…SYIT), and 479–501 (PFQT…GITL).

In terms of tissue distribution, widely expressed. Highly expressed in kidney and pancreas.

It localises to the cell membrane. Functionally, involved in the inhibition of cytokine-induced death of pancreatic beta cells. Involved in the promotion of insulin secretion from pancreatic beta cells. Is a downstream transcriptional target of p53/TP53, and acts as a pro-survival homeostatic factor that attenuates the development of cellular stress. Maintains protein homeostasis and promotes cell survival through attenuation of endoplasmic reticulum (ER) stress and the subsequent induction of unfolded protein response (UPR). In Homo sapiens (Human), this protein is Transmembrane 7 superfamily member 3 (TM7SF3).